We begin with the raw amino-acid sequence, 907 residues long: Protein translocase subunit SecA (907 aa).

ATP-binding positions include Gln-87, 105–109 (GEGKT), and Asp-510. Residues Cys-892, Cys-894, Cys-903, and His-904 each coordinate Zn(2+).

The protein belongs to the SecA family. As to quaternary structure, monomer and homodimer. Part of the essential Sec protein translocation apparatus which comprises SecA, SecYEG and auxiliary proteins SecDF-YajC and YidC. Zn(2+) serves as cofactor.

The protein resides in the cell inner membrane. It is found in the cytoplasm. The enzyme catalyses ATP + H2O + cellular proteinSide 1 = ADP + phosphate + cellular proteinSide 2.. In terms of biological role, part of the Sec protein translocase complex. Interacts with the SecYEG preprotein conducting channel. Has a central role in coupling the hydrolysis of ATP to the transfer of proteins into and across the cell membrane, serving both as a receptor for the preprotein-SecB complex and as an ATP-driven molecular motor driving the stepwise translocation of polypeptide chains across the membrane. The chain is Protein translocase subunit SecA from Acinetobacter baumannii (strain ATCC 17978 / DSM 105126 / CIP 53.77 / LMG 1025 / NCDC KC755 / 5377).